The chain runs to 139 residues: uncharacterized protein (139 aa).

One can recognise an HTH asnC-type domain in the interval 1 to 62 (MDDTDLQILS…NICYEKLNKH (62 aa)). The H-T-H motif DNA-binding region spans 20–39 (MVELGKLVGLSSPSAAERVR).

This is an uncharacterized protein from Bacillus subtilis (strain 168).